The primary structure comprises 458 residues: uncharacterized protein (458 aa).

2 disordered regions span residues 339–397 and 434–458; these read GTGY…ARIL and YNSE…EDDC. Acidic residues-rich tracts occupy residues 344–390 and 436–458; these read SDSD…EEEP and SEDE…EDDC.

This is an uncharacterized protein from Invertebrate iridescent virus 3 (IIV-3).